A 323-amino-acid chain; its full sequence is L-lactate dehydrogenase (323 aa).

NAD(+) is bound by residues Val18, Asp39, Arg44, Tyr69, and 83 to 84; that span reads GA. 2 residues coordinate substrate: Gln86 and Arg92. NAD(+)-binding positions include Thr105, 122–124, and Ser147; that span reads AAN. 124–127 contributes to the substrate binding site; it reads NPVD. Substrate is bound at residue 152 to 155; sequence DTAR. His179 serves as the catalytic Proton acceptor. Tyr223 bears the Phosphotyrosine mark. Thr232 contacts substrate.

Belongs to the LDH/MDH superfamily. LDH family. As to quaternary structure, homotetramer.

The protein resides in the cytoplasm. The catalysed reaction is (S)-lactate + NAD(+) = pyruvate + NADH + H(+). The protein operates within fermentation; pyruvate fermentation to lactate; (S)-lactate from pyruvate: step 1/1. Its function is as follows. Catalyzes the conversion of lactate to pyruvate. The sequence is that of L-lactate dehydrogenase from Pediococcus acidilactici.